We begin with the raw amino-acid sequence, 723 residues long: MDEMSAYVAYGMKKTAKKPAKKTTKQNRQKQKAANIYSLATSTPAKISAVKQNNGAKGKAKANGVKGNAKAQTTKDSATNSVAKMADESVDDYSSDSSYDEDEDNEELSHSSNEDDYGSELSSGEEFEEYTLNSPSGSCSCSASSGSSNTENSPPAATSSRTPKKRSTGDMDDNNNKSPAVKQQKLQPQEQKEGKELSKKGSRKSAPAAAPSCPLLRLSGNAAAIKSSAMPSKATAEKRKSCPLPKKMAAAGKGVAVVKQEPKAKVESVQNGGVEDSVERGICVLGALLDPLSLDDFFSRYWESKACQVKRKRKDLYSDLVSFEMIDEMLIENHLEFTTNIDVTSYKDGVRQTHNPDGRAMPPTVWGHYSDGCSVRILNPSTYLKGLRGVCAALQEHFHCLVGANVYLTPPNSQGFAPHYDDIEAFVLQVEGRKRWRLYDAPSPNDVLARTSSGNLKQQQLSKPIFDEVLEAGDLLYFPRGCVHQAVTEQQHHSLHITLSVYQQQSYANLMEALMPAVLQNAIKHNLDMRRGLPLGTWHHLGMVHGDKKTKERSDLITHTQSLFSKYLAPTASQIDAAVDQLAIRFQHEALPPRIASSEKKRTVFGSRNKKDKHGNCRCDYDLTEQTKIRLLRQNIVRLVAQEENSLRLYYYVDNALEYCKYEANFMEIDRVEANAIKMLINSYPKYVSISSLPLPNVEHCLDTATGLWERGLLITEEPFKKN.

Disordered stretches follow at residues 13–34 (KKTA…QKAA) and 48–213 (SAVK…APSC). Residues 14–31 (KTAKKPAKKTTKQNRQKQ) are compositionally biased toward basic residues. The segment covering 49–72 (AVKQNNGAKGKAKANGVKGNAKAQ) has biased composition (low complexity). 2 stretches are compositionally biased toward acidic residues: residues 88–106 (ESVD…EDNE) and 114–129 (EDDY…EFEE). Residues 133–155 (NSPSGSCSCSASSGSSNTENSPP) show a composition bias toward low complexity. A compositionally biased stretch (basic and acidic residues) spans 190-199 (EQKEGKELSK). The segment covering 204 to 213 (KSAPAAAPSC) has biased composition (low complexity). The 140-residue stretch at 379-518 (NPSTYLKGLR…NLMEALMPAV (140 aa)) folds into the JmjC domain. 3 residues coordinate Fe cation: H419, D421, and H484.

The protein belongs to the ROX family. NO66 subfamily. It depends on Fe(2+) as a cofactor.

Its subcellular location is the nucleus. It catalyses the reaction N(6),N(6)-dimethyl-L-lysyl(36)-[histone H3] + 2 2-oxoglutarate + 2 O2 = L-lysyl(36)-[histone H3] + 2 formaldehyde + 2 succinate + 2 CO2. In terms of biological role, oxygenase that can act as both a histone lysine demethylase and a ribosomal histidine hydroxylase. Specifically demethylates 'Lys-4' (H3K4me) and 'Lys-36' (H3K36me) of histone H3, thereby playing a central role in histone code. The chain is Bifunctional lysine-specific demethylase and histidyl-hydroxylase NO66 from Drosophila grimshawi (Hawaiian fruit fly).